A 143-amino-acid polypeptide reads, in one-letter code: Large ribosomal subunit protein uL15 (143 aa).

Residues 1–54 are disordered; it reads MELNSIKPAEGAKHAKRRVGRGIGSGLGKTAGRGHKGQKSRSGGYHKVGFEGGQ. Residues 21–31 are compositionally biased toward gly residues; the sequence is RGIGSGLGKTA.

The protein belongs to the universal ribosomal protein uL15 family. In terms of assembly, part of the 50S ribosomal subunit.

In terms of biological role, binds to the 23S rRNA. This is Large ribosomal subunit protein uL15 from Paracidovorax citrulli (strain AAC00-1) (Acidovorax citrulli).